The primary structure comprises 93 residues: Large ribosomal subunit protein uL23 (93 aa).

This sequence belongs to the universal ribosomal protein uL23 family. In terms of assembly, part of the 50S ribosomal subunit. Contacts protein L29, and trigger factor when it is bound to the ribosome.

Functionally, one of the early assembly proteins it binds 23S rRNA. One of the proteins that surrounds the polypeptide exit tunnel on the outside of the ribosome. Forms the main docking site for trigger factor binding to the ribosome. This chain is Large ribosomal subunit protein uL23, found in Opitutus terrae (strain DSM 11246 / JCM 15787 / PB90-1).